The chain runs to 406 residues: 3-oxoacyl-[acyl-carrier-protein] synthase 1 (406 aa).

Residues 1-403 (MRRTVITGFG…GTNATLIFKR (403 aa)) form the Ketosynthase family 3 (KS3) domain. Catalysis depends on for beta-ketoacyl synthase activity residues cysteine 162, histidine 297, and histidine 332.

It belongs to the thiolase-like superfamily. Beta-ketoacyl-ACP synthases family. In terms of assembly, homodimer.

The protein localises to the cytoplasm. The enzyme catalyses a fatty acyl-[ACP] + malonyl-[ACP] + H(+) = a 3-oxoacyl-[ACP] + holo-[ACP] + CO2. It catalyses the reaction (3Z)-decenoyl-[ACP] + malonyl-[ACP] + H(+) = 3-oxo-(5Z)-dodecenoyl-[ACP] + holo-[ACP] + CO2. It participates in lipid metabolism; fatty acid biosynthesis. Involved in the type II fatty acid elongation cycle. Catalyzes the elongation of a wide range of acyl-ACP by the addition of two carbons from malonyl-ACP to an acyl acceptor. Can also use unsaturated fatty acids. Catalyzes a key reaction in unsaturated fatty acid (UFA) synthesis, the elongation of the cis-3-decenoyl-ACP produced by FabA. This Haemophilus influenzae (strain ATCC 51907 / DSM 11121 / KW20 / Rd) protein is 3-oxoacyl-[acyl-carrier-protein] synthase 1 (fabB).